A 350-amino-acid chain; its full sequence is Biotin synthase (350 aa).

The Radical SAM core domain maps to 38 to 256 (NYVQVSTLLS…IAVARIMMPE (219 aa)). Positions 53, 57, and 60 each coordinate [4Fe-4S] cluster. Residues C97, C128, C188, and R260 each contribute to the [2Fe-2S] cluster site.

This sequence belongs to the radical SAM superfamily. Biotin synthase family. Homodimer. Requires [4Fe-4S] cluster as cofactor. [2Fe-2S] cluster is required as a cofactor.

The catalysed reaction is (4R,5S)-dethiobiotin + (sulfur carrier)-SH + 2 reduced [2Fe-2S]-[ferredoxin] + 2 S-adenosyl-L-methionine = (sulfur carrier)-H + biotin + 2 5'-deoxyadenosine + 2 L-methionine + 2 oxidized [2Fe-2S]-[ferredoxin]. It functions in the pathway cofactor biosynthesis; biotin biosynthesis; biotin from 7,8-diaminononanoate: step 2/2. Functionally, catalyzes the conversion of dethiobiotin (DTB) to biotin by the insertion of a sulfur atom into dethiobiotin via a radical-based mechanism. The polypeptide is Biotin synthase (Aliivibrio salmonicida (strain LFI1238) (Vibrio salmonicida (strain LFI1238))).